A 66-amino-acid polypeptide reads, in one-letter code: Photosystem II reaction center protein H (66 aa).

Residues 27–47 (GAVPVMTVIGLLLLVFLVILL) traverse the membrane as a helical segment.

It belongs to the PsbH family. As to quaternary structure, PSII is composed of 1 copy each of membrane proteins PsbA, PsbB, PsbC, PsbD, PsbE, PsbF, PsbH, PsbI, PsbJ, PsbK, PsbL, PsbM, PsbT, PsbX, PsbY, Psb30/Ycf12, peripheral proteins PsbO, CyanoQ (PsbQ), PsbU, PsbV and a large number of cofactors. It forms dimeric complexes.

The protein resides in the cellular thylakoid membrane. Functionally, one of the components of the core complex of photosystem II (PSII), required for its stability and/or assembly. PSII is a light-driven water:plastoquinone oxidoreductase that uses light energy to abstract electrons from H(2)O, generating O(2) and a proton gradient subsequently used for ATP formation. It consists of a core antenna complex that captures photons, and an electron transfer chain that converts photonic excitation into a charge separation. This is Photosystem II reaction center protein H from Prochlorococcus marinus (strain MIT 9215).